We begin with the raw amino-acid sequence, 117 residues long: NADH-ubiquinone oxidoreductase chain 3 (117 aa).

The next 3 membrane-spanning stretches (helical) occupy residues 1 to 21, 58 to 78, and 86 to 106; these read MKFI…LLLL, FLMT…LPII, and TMIS…TLIL.

Belongs to the complex I subunit 3 family.

The protein localises to the mitochondrion membrane. The catalysed reaction is a ubiquinone + NADH + 5 H(+)(in) = a ubiquinol + NAD(+) + 4 H(+)(out). In terms of biological role, core subunit of the mitochondrial membrane respiratory chain NADH dehydrogenase (Complex I) that is believed to belong to the minimal assembly required for catalysis. Complex I functions in the transfer of electrons from NADH to the respiratory chain. The immediate electron acceptor for the enzyme is believed to be ubiquinone. This is NADH-ubiquinone oxidoreductase chain 3 (ND3) from Apis mellifera ligustica (Common honeybee).